The sequence spans 412 residues: Probable histone-binding protein rba-1 (412 aa).

6 WD repeats span residues 117–157 (NHPG…SEPK), 169–209 (GHEG…TISG), 219–259 (GHSS…PQLT), 262–302 (GHTA…KKMY), 306–346 (HHND…DPSS), and 365–405 (GHTG…VSSE).

The protein belongs to the WD repeat RBAP46/RBAP48/MSI1 family. As to quaternary structure, binds directly to helix 1 of the histone fold of histone H4, a region that is not accessible when H4 is in chromatin. Interacts with zft-11; the interaction is required to suppress the activation of non-neuronal genes in neurons.

It localises to the nucleus. Functionally, core histone-binding subunit that may target chromatin assembly factors, chromatin remodeling factors and histone deacetylases to their histone substrates in a manner that is regulated by nucleosomal DNA. Plays a role in regulating cell cycle progression. Required to repress the induction of vulval development by Ras signaling. In association with the zinc finger protein ztf-11, negatively regulates the expression of non-neuronal genes during neurogenesis. The sequence is that of Probable histone-binding protein rba-1 from Caenorhabditis elegans.